The chain runs to 91 residues: Small ribosomal subunit protein uS19 (91 aa).

This sequence belongs to the universal ribosomal protein uS19 family.

Functionally, protein S19 forms a complex with S13 that binds strongly to the 16S ribosomal RNA. The sequence is that of Small ribosomal subunit protein uS19 from Sphingopyxis alaskensis (strain DSM 13593 / LMG 18877 / RB2256) (Sphingomonas alaskensis).